We begin with the raw amino-acid sequence, 166 residues long: Small ribosomal subunit protein uS5 (166 aa).

An S5 DRBM domain is found at 11–74; the sequence is LQEKLIAVNR…EKARRNMINV (64 aa).

This sequence belongs to the universal ribosomal protein uS5 family. In terms of assembly, part of the 30S ribosomal subunit. Contacts proteins S4 and S8.

Functionally, with S4 and S12 plays an important role in translational accuracy. Located at the back of the 30S subunit body where it stabilizes the conformation of the head with respect to the body. This Enterobacter sp. (strain 638) protein is Small ribosomal subunit protein uS5.